The primary structure comprises 578 residues: Acyl-coenzyme A synthetase ACSM5, mitochondrial (578 aa).

A mitochondrion-targeting transit peptide spans Met1–Ile22. Lys96 bears the N6-acetyllysine; alternate mark. Position 96 is an N6-succinyllysine; alternate (Lys96). Lys151 carries the N6-acetyllysine modification. Thr229–Lys237 contacts ATP. Residue Lys302 is modified to N6-acetyllysine; alternate. Residue Lys302 is modified to N6-succinyllysine; alternate. Lys335 carries the post-translational modification N6-acetyllysine. Residues Glu367–Ser372, Asp454, Arg469, and Lys565 each bind ATP.

It belongs to the ATP-dependent AMP-binding enzyme family. The cofactor is Mg(2+). Mn(2+) serves as cofactor.

The protein resides in the mitochondrion matrix. The catalysed reaction is a medium-chain fatty acid + ATP + CoA = a medium-chain fatty acyl-CoA + AMP + diphosphate. Its function is as follows. Catalyzes the activation of fatty acids by CoA to produce an acyl-CoA, the first step in fatty acid metabolism. The polypeptide is Acyl-coenzyme A synthetase ACSM5, mitochondrial (Acsm5) (Mus musculus (Mouse)).